Consider the following 409-residue polypeptide: Tryptophan synthase beta chain (409 aa).

Lysine 86 carries the N6-(pyridoxal phosphate)lysine modification.

Belongs to the TrpB family. As to quaternary structure, tetramer of two alpha and two beta chains. Pyridoxal 5'-phosphate is required as a cofactor.

The catalysed reaction is (1S,2R)-1-C-(indol-3-yl)glycerol 3-phosphate + L-serine = D-glyceraldehyde 3-phosphate + L-tryptophan + H2O. It participates in amino-acid biosynthesis; L-tryptophan biosynthesis; L-tryptophan from chorismate: step 5/5. Functionally, the beta subunit is responsible for the synthesis of L-tryptophan from indole and L-serine. This Shewanella pealeana (strain ATCC 700345 / ANG-SQ1) protein is Tryptophan synthase beta chain.